Here is a 115-residue protein sequence, read N- to C-terminus: NADH-ubiquinone oxidoreductase chain 3 (115 aa).

3 consecutive transmembrane segments (helical) span residues 4–24, 55–75, and 87–107; these read FMAL…AFWL, FFLV…LLPL, and MMLT…YEWV.

Belongs to the complex I subunit 3 family. Core subunit of respiratory chain NADH dehydrogenase (Complex I) which is composed of 45 different subunits. Interacts with TMEM186. Interacts with TMEM242.

The protein localises to the mitochondrion inner membrane. The enzyme catalyses a ubiquinone + NADH + 5 H(+)(in) = a ubiquinol + NAD(+) + 4 H(+)(out). Functionally, core subunit of the mitochondrial membrane respiratory chain NADH dehydrogenase (Complex I) which catalyzes electron transfer from NADH through the respiratory chain, using ubiquinone as an electron acceptor. Essential for the catalytic activity of complex I. This Osgoodomys banderanus (Michoacan deer mouse) protein is NADH-ubiquinone oxidoreductase chain 3.